Reading from the N-terminus, the 706-residue chain is Elongation factor G 1 (706 aa).

The 283-residue stretch at N8–T290 folds into the tr-type G domain. Residues A17–T24, D88–H92, and N142–D145 each bind GTP.

Belongs to the TRAFAC class translation factor GTPase superfamily. Classic translation factor GTPase family. EF-G/EF-2 subfamily.

It localises to the cytoplasm. Its function is as follows. Catalyzes the GTP-dependent ribosomal translocation step during translation elongation. During this step, the ribosome changes from the pre-translocational (PRE) to the post-translocational (POST) state as the newly formed A-site-bound peptidyl-tRNA and P-site-bound deacylated tRNA move to the P and E sites, respectively. Catalyzes the coordinated movement of the two tRNA molecules, the mRNA and conformational changes in the ribosome. This Pseudomonas aeruginosa (strain ATCC 15692 / DSM 22644 / CIP 104116 / JCM 14847 / LMG 12228 / 1C / PRS 101 / PAO1) protein is Elongation factor G 1.